The chain runs to 470 residues: Suppressor of SWI4 1 homolog (470 aa).

Residues 29 to 292 (PHSFVFTRGR…LIKIQEGVGN (264 aa)) enclose the Brix domain. Serine 238 and serine 240 each carry phosphoserine. 2 disordered regions span residues 240-264 (SEVE…GNMQ) and 323-470 (AQRQ…RRRN). Basic residues predominate over residues 342–355 (AHKKKSLAGIKRAR). Serine 362 is subject to Phosphoserine. Residue lysine 441 is modified to N6-acetyllysine. The segment covering 447-457 (QRGKAKPRPRA) has biased composition (basic residues).

The protein resides in the nucleus. It is found in the nucleolus. May have a role in cell growth. In Mus musculus (Mouse), this protein is Suppressor of SWI4 1 homolog (Ppan).